The chain runs to 557 residues: Dihydroxy-acid dehydratase (557 aa).

Mg(2+) is bound at residue Asp-78. Position 119 (Cys-119) interacts with [2Fe-2S] cluster. Residues Asp-120 and Lys-121 each coordinate Mg(2+). Lys-121 is subject to N6-carboxylysine. Cys-192 serves as a coordination point for [2Fe-2S] cluster. Glu-442 contacts Mg(2+). Catalysis depends on Ser-468, which acts as the Proton acceptor.

This sequence belongs to the IlvD/Edd family. In terms of assembly, homodimer. [2Fe-2S] cluster serves as cofactor. The cofactor is Mg(2+).

The catalysed reaction is (2R)-2,3-dihydroxy-3-methylbutanoate = 3-methyl-2-oxobutanoate + H2O. The enzyme catalyses (2R,3R)-2,3-dihydroxy-3-methylpentanoate = (S)-3-methyl-2-oxopentanoate + H2O. It participates in amino-acid biosynthesis; L-isoleucine biosynthesis; L-isoleucine from 2-oxobutanoate: step 3/4. The protein operates within amino-acid biosynthesis; L-valine biosynthesis; L-valine from pyruvate: step 3/4. In terms of biological role, functions in the biosynthesis of branched-chain amino acids. Catalyzes the dehydration of (2R,3R)-2,3-dihydroxy-3-methylpentanoate (2,3-dihydroxy-3-methylvalerate) into 2-oxo-3-methylpentanoate (2-oxo-3-methylvalerate) and of (2R)-2,3-dihydroxy-3-methylbutanoate (2,3-dihydroxyisovalerate) into 2-oxo-3-methylbutanoate (2-oxoisovalerate), the penultimate precursor to L-isoleucine and L-valine, respectively. This is Dihydroxy-acid dehydratase from Bacillus cereus (strain AH820).